The primary structure comprises 218 residues: tRNA (guanine-N(7)-)-methyltransferase (218 aa).

Residues 1–25 (MRLKNKPWANELVEEHPESALDRPN) are disordered. Residues 13–25 (VEEHPESALDRPN) are compositionally biased toward basic and acidic residues. S-adenosyl-L-methionine is bound by residues glutamate 45, glutamate 70, aspartate 97, and aspartate 119. Aspartate 119 is an active-site residue. Lysine 123 is a binding site for substrate. Residues 125-130 (RHEKRR) are interaction with RNA. Substrate is bound by residues aspartate 155 and 195 to 198 (TEYE).

Belongs to the class I-like SAM-binding methyltransferase superfamily. TrmB family.

It catalyses the reaction guanosine(46) in tRNA + S-adenosyl-L-methionine = N(7)-methylguanosine(46) in tRNA + S-adenosyl-L-homocysteine. The protein operates within tRNA modification; N(7)-methylguanine-tRNA biosynthesis. Its function is as follows. Catalyzes the formation of N(7)-methylguanine at position 46 (m7G46) in tRNA. In Lactobacillus delbrueckii subsp. bulgaricus (strain ATCC BAA-365 / Lb-18), this protein is tRNA (guanine-N(7)-)-methyltransferase.